The following is a 397-amino-acid chain: MAKAKFERTKPHCNIGTIGHIDHGKTTLTAAISKVLHDKYPELNEESPFDQIDKAPEERQRGITISIAHIEYQTEKRHYAHVDCPGHADYVKNMITGAAQMDGAILVVAATDGPMPQTREHVLLARQVGVPAIVVALNKCDMVDDEELIELVEMEVRELLTSQEFDGDNCPVVRISAFQALQGDEKWTQSILDLMDAVDEYIPQPERDLDKPFLMPIEDVFTITGRGTVVTGRVERGVVKTGEEVEIVGIHEKTQKTTVTGVEMFRKILDEGRAGENVGVLLRGTKKEDVVRGMVLSKPGSTTPHTDFEGQVYVLKKDEGGRHKPFFSHYSPQFYFRTTDVTGTVELPEGTEMVMPGDNTDMTVHLIHPVAMEDQLKFAIREGGRTVGAGRVTKIIK.

One can recognise a tr-type G domain in the interval 10 to 206 (KPHCNIGTIG…AVDEYIPQPE (197 aa)). Positions 19 to 26 (GHIDHGKT) are G1. GTP is bound at residue 19–26 (GHIDHGKT). Residue Thr26 participates in Mg(2+) binding. The interval 62–66 (GITIS) is G2. A G3 region spans residues 83–86 (DCPG). Residues 83 to 87 (DCPGH) and 138 to 141 (NKCD) contribute to the GTP site. Positions 138 to 141 (NKCD) are G4. A G5 region spans residues 176 to 178 (SAF).

It belongs to the TRAFAC class translation factor GTPase superfamily. Classic translation factor GTPase family. EF-Tu/EF-1A subfamily. In terms of assembly, monomer.

Its subcellular location is the cytoplasm. The enzyme catalyses GTP + H2O = GDP + phosphate + H(+). Its function is as follows. GTP hydrolase that promotes the GTP-dependent binding of aminoacyl-tRNA to the A-site of ribosomes during protein biosynthesis. In Cutibacterium acnes (strain DSM 16379 / KPA171202) (Propionibacterium acnes), this protein is Elongation factor Tu.